Reading from the N-terminus, the 124-residue chain is Putative outer membrane protein TC_0858 (124 aa).

A signal peptide spans 1–31; that stretch reads MGKTKKRKQSITLIEMMVVITLIGIISGALA.

The protein localises to the cell outer membrane. This is Putative outer membrane protein TC_0858 from Chlamydia muridarum (strain MoPn / Nigg).